Reading from the N-terminus, the 222-residue chain is Large ribosomal subunit protein bL25 (222 aa).

The protein belongs to the bacterial ribosomal protein bL25 family. CTC subfamily. As to quaternary structure, part of the 50S ribosomal subunit; part of the 5S rRNA/L5/L18/L25 subcomplex. Contacts the 5S rRNA. Binds to the 5S rRNA independently of L5 and L18.

Its function is as follows. This is one of the proteins that binds to the 5S RNA in the ribosome where it forms part of the central protuberance. The protein is Large ribosomal subunit protein bL25 of Ruthia magnifica subsp. Calyptogena magnifica.